The sequence spans 161 residues: Probable chemoreceptor glutamine deamidase CheD (161 aa).

It belongs to the CheD family.

It carries out the reaction L-glutaminyl-[protein] + H2O = L-glutamyl-[protein] + NH4(+). Functionally, probably deamidates glutamine residues to glutamate on methyl-accepting chemotaxis receptors (MCPs), playing an important role in chemotaxis. The polypeptide is Probable chemoreceptor glutamine deamidase CheD (Lachnoclostridium phytofermentans (strain ATCC 700394 / DSM 18823 / ISDg) (Clostridium phytofermentans)).